The sequence spans 186 residues: Putative 3-methyladenine DNA glycosylase (186 aa).

This sequence belongs to the DNA glycosylase MPG family.

The chain is Putative 3-methyladenine DNA glycosylase from Borreliella afzelii (strain PKo) (Borrelia afzelii).